The following is a 275-amino-acid chain: Dermonecrotic toxin SpeSicTox-betaIIA2v (275 aa).

Residue His5 is part of the active site. Positions 25 and 27 each coordinate Mg(2+). His41 serves as the catalytic Nucleophile. 2 cysteine pairs are disulfide-bonded: Cys45-Cys51 and Cys47-Cys190. Mg(2+) is bound at residue Asp85.

Belongs to the arthropod phospholipase D family. Class II subfamily. The cofactor is Mg(2+). Expressed by the venom gland.

Its subcellular location is the secreted. The enzyme catalyses an N-(acyl)-sphingosylphosphocholine = an N-(acyl)-sphingosyl-1,3-cyclic phosphate + choline. It catalyses the reaction an N-(acyl)-sphingosylphosphoethanolamine = an N-(acyl)-sphingosyl-1,3-cyclic phosphate + ethanolamine. The catalysed reaction is a 1-acyl-sn-glycero-3-phosphocholine = a 1-acyl-sn-glycero-2,3-cyclic phosphate + choline. It carries out the reaction a 1-acyl-sn-glycero-3-phosphoethanolamine = a 1-acyl-sn-glycero-2,3-cyclic phosphate + ethanolamine. Its function is as follows. Dermonecrotic toxins cleave the phosphodiester linkage between the phosphate and headgroup of certain phospholipids (sphingolipid and lysolipid substrates), forming an alcohol (often choline) and a cyclic phosphate. This toxin acts on sphingomyelin (SM). It may also act on ceramide phosphoethanolamine (CPE), lysophosphatidylcholine (LPC) and lysophosphatidylethanolamine (LPE), but not on lysophosphatidylserine (LPS), and lysophosphatidylglycerol (LPG). It acts by transphosphatidylation, releasing exclusively cyclic phosphate products as second products. Induces dermonecrosis, hemolysis, increased vascular permeability, edema, inflammatory response, and platelet aggregation. The polypeptide is Dermonecrotic toxin SpeSicTox-betaIIA2v (Sicarius peruensis (Six-eyed sand spider)).